The primary structure comprises 270 residues: Aliphatic sulfonates import ATP-binding protein SsuB 3 (270 aa).

One can recognise an ABC transporter domain in the interval 17-238; it reads LAVQNLKKAF…ARGSHRLAAL (222 aa). 49-56 contributes to the ATP binding site; it reads GRSGCGKS.

Belongs to the ABC transporter superfamily. Aliphatic sulfonates importer (TC 3.A.1.17.2) family. The complex is composed of two ATP-binding proteins (SsuB), two transmembrane proteins (SsuC) and a solute-binding protein (SsuA).

It is found in the cell inner membrane. It catalyses the reaction ATP + H2O + aliphatic sulfonate-[sulfonate-binding protein]Side 1 = ADP + phosphate + aliphatic sulfonateSide 2 + [sulfonate-binding protein]Side 1.. Part of the ABC transporter complex SsuABC involved in aliphatic sulfonates import. Responsible for energy coupling to the transport system. The protein is Aliphatic sulfonates import ATP-binding protein SsuB 3 of Pseudomonas syringae pv. tomato (strain ATCC BAA-871 / DC3000).